The following is a 152-amino-acid chain: SsrA-binding protein (152 aa).

The protein belongs to the SmpB family.

Its subcellular location is the cytoplasm. Its function is as follows. Required for rescue of stalled ribosomes mediated by trans-translation. Binds to transfer-messenger RNA (tmRNA), required for stable association of tmRNA with ribosomes. tmRNA and SmpB together mimic tRNA shape, replacing the anticodon stem-loop with SmpB. tmRNA is encoded by the ssrA gene; the 2 termini fold to resemble tRNA(Ala) and it encodes a 'tag peptide', a short internal open reading frame. During trans-translation Ala-aminoacylated tmRNA acts like a tRNA, entering the A-site of stalled ribosomes, displacing the stalled mRNA. The ribosome then switches to translate the ORF on the tmRNA; the nascent peptide is terminated with the 'tag peptide' encoded by the tmRNA and targeted for degradation. The ribosome is freed to recommence translation, which seems to be the essential function of trans-translation. The sequence is that of SsrA-binding protein from Rickettsia prowazekii (strain Madrid E).